The sequence spans 500 residues: E3 ubiquitin-protein ligase TRIM69 (500 aa).

Residues 1–22 form a disordered region; that stretch reads MEVSSRPPSNFDPGNYVEMSDP. The tract at residues 1–153 is necessary for nuclear localization; it reads MEVSSRPPSN…SMGQSKDFLQ (153 aa). An RING-type zinc finger spans residues 42–83; that stretch reads CPLCNDWFRDPLMLTCGHNFCQDCIQSFWKVHSKETFCPDCK. The stretch at 217–256 forms a coiled coil; sequence NKEKDILNDLRDEGKLLNEEMEVNLNQIQEQCLVAKDMLA. Residues 306–500 form the B30.2/SPRY domain; sequence PIQYIIWKEM…KEPLHIVHPQ (195 aa). The residue at position 342 (serine 342) is a Phosphoserine.

Belongs to the TRIM/RBCC family. As to quaternary structure, homo-multimer; required for antiviral activity. Interacts with PML. Phosphorylated. Phosphorylation is necessary for nuclear localization. As to expression, expressed in spermatid.

It localises to the cytoplasm. The protein localises to the nucleus. The protein resides in the nucleus speckle. Its subcellular location is the cytoskeleton. It is found in the microtubule organizing center. It localises to the centrosome. The enzyme catalyses S-ubiquitinyl-[E2 ubiquitin-conjugating enzyme]-L-cysteine + [acceptor protein]-L-lysine = [E2 ubiquitin-conjugating enzyme]-L-cysteine + N(6)-ubiquitinyl-[acceptor protein]-L-lysine.. It functions in the pathway protein modification; protein ubiquitination. Functionally, E3 ubiquitin ligase that plays an important role in antiviral immunity by restricting different viral infections including dengue virus or vesicular stomatitis indiana virus. Ubiquitinates viral proteins such as dengue virus NS3 thereby limiting infection. In addition, acts as a key mediator of type I interferon induced microtubule stabilization by directly associating to microtubules independently of its E3 ligase activity. Also plays a role in cataract formation together with TP53. Mechanistically, inhibits UVB-induced cell apoptosis and reactive oxygen species (ROS) production by inducing TP53 ubiquitination. Regulates centrosome dynamics and mitotic progression by ubiquitinating STK3/MST2; leading to its redistribution to the perinuclear cytoskeleton and subsequent phosphorylation by PLK1. The polypeptide is E3 ubiquitin-protein ligase TRIM69 (Trim69) (Mus musculus (Mouse)).